The chain runs to 363 residues: Flagellar P-ring protein (363 aa).

An N-terminal signal peptide occupies residues 1-20 (MKLKLFLLSVLLLVSGSSQA).

This sequence belongs to the FlgI family. In terms of assembly, the basal body constitutes a major portion of the flagellar organelle and consists of four rings (L,P,S, and M) mounted on a central rod.

The protein localises to the periplasm. Its subcellular location is the bacterial flagellum basal body. Functionally, assembles around the rod to form the L-ring and probably protects the motor/basal body from shearing forces during rotation. This is Flagellar P-ring protein from Shewanella woodyi (strain ATCC 51908 / MS32).